Reading from the N-terminus, the 658-residue chain is Methionine--tRNA ligase (658 aa).

The 'HIGH' region motif lies at 9-19 (PYANGKAHVGH). Zn(2+) contacts are provided by Cys-140, Cys-143, Cys-152, and Cys-156. The short motif at 322–326 (TFSKS) is the 'KMSKS' region element. Lys-325 contributes to the ATP binding site. The region spanning 558 to 658 (DFQKLDIRIG…KEVEPGTRVC (101 aa)) is the tRNA-binding domain.

This sequence belongs to the class-I aminoacyl-tRNA synthetase family. MetG type 1 subfamily. As to quaternary structure, homodimer. It depends on Zn(2+) as a cofactor.

Its subcellular location is the cytoplasm. It carries out the reaction tRNA(Met) + L-methionine + ATP = L-methionyl-tRNA(Met) + AMP + diphosphate. In terms of biological role, is required not only for elongation of protein synthesis but also for the initiation of all mRNA translation through initiator tRNA(fMet) aminoacylation. The protein is Methionine--tRNA ligase of Archaeoglobus fulgidus (strain ATCC 49558 / DSM 4304 / JCM 9628 / NBRC 100126 / VC-16).